Here is a 550-residue protein sequence, read N- to C-terminus: Formin-binding protein 1-like (550 aa).

Residues 1–263 (MSWGTELWDQ…AAKSVDERRD (263 aa)) enclose the F-BAR domain. Coiled coils occupy residues 66-258 (FTSC…AKSV) and 334-426 (LEDF…QRSE). Positions 339-416 (HLPPEQRRKR…IHKNEAWLSE (78 aa)) constitute an REM-1 domain. The segment covering 423–432 (QRSERRHSAE) has biased composition (basic and acidic residues). Residues 423–467 (QRSERRHSAEANHLVAQGRESPEGSYTEDANQEGRVQPQPHAHPE) are disordered. The SH3 domain occupies 479-540 (PAIGHCKSLY…PTSYIDITLE (62 aa)).

The protein belongs to the FNBP1 family. Homodimerizes, the dimers can polymerize end-to-end to form filamentous structures. Interacts with GTP-bound cdc42 and wasl/n-wasp.

It is found in the cytoplasm. The protein resides in the cytoskeleton. The protein localises to the cell cortex. Its subcellular location is the cytoplasmic vesicle. It localises to the cell membrane. Its function is as follows. Required to coordinate membrane tubulation with reorganization of the actin cytoskeleton during endocytosis. Promotes cdc42-induced actin polymerization by activating the wasl-waspip complex, the predominant form of wasl/n-wasp in cells. Essential for autophagy of intracellular bacterial pathogens. This Xenopus tropicalis (Western clawed frog) protein is Formin-binding protein 1-like (fnbp1l).